Consider the following 436-residue polypeptide: Trigger factor (436 aa).

The region spanning 163 to 248 is the PPIase FKBP-type domain; it reads GDRVTIDFEG…VKKIEAAHLP (86 aa).

This sequence belongs to the FKBP-type PPIase family. Tig subfamily.

It localises to the cytoplasm. It carries out the reaction [protein]-peptidylproline (omega=180) = [protein]-peptidylproline (omega=0). Involved in protein export. Acts as a chaperone by maintaining the newly synthesized protein in an open conformation. Functions as a peptidyl-prolyl cis-trans isomerase. This is Trigger factor from Polaromonas naphthalenivorans (strain CJ2).